A 441-amino-acid polypeptide reads, in one-letter code: Queuine tRNA-ribosyltransferase accessory subunit 2 (441 aa).

Cys307, Cys309, Cys312, and His338 together coordinate Zn(2+).

The protein belongs to the queuine tRNA-ribosyltransferase family. QTRT2 subfamily. In terms of assembly, heterodimer of a catalytic subunit and an accessory subunit. It depends on Zn(2+) as a cofactor.

The protein resides in the cytoplasm. Functionally, non-catalytic subunit of the queuine tRNA-ribosyltransferase (TGT) that catalyzes the base-exchange of a guanine (G) residue with queuine (Q) at position 34 (anticodon wobble position) in tRNAs with GU(N) anticodons (tRNA-Asp, -Asn, -His and -Tyr), resulting in the hypermodified nucleoside queuosine (7-(((4,5-cis-dihydroxy-2-cyclopenten-1-yl)amino)methyl)-7-deazaguanosine). This Schizosaccharomyces pombe (strain 972 / ATCC 24843) (Fission yeast) protein is Queuine tRNA-ribosyltransferase accessory subunit 2 (qtr2).